The primary structure comprises 261 residues: Carnitinyl-CoA dehydratase (261 aa).

The Nucleophile role is filled by E111. The active-site Proton acceptor is E131.

This sequence belongs to the enoyl-CoA hydratase/isomerase family.

It carries out the reaction (R)-carnitinyl-CoA = crotonobetainyl-CoA + H2O. The protein operates within amine and polyamine metabolism; carnitine metabolism. Its function is as follows. Catalyzes the reversible dehydration of L-carnitinyl-CoA to crotonobetainyl-CoA. In Salmonella dublin (strain CT_02021853), this protein is Carnitinyl-CoA dehydratase.